Reading from the N-terminus, the 873-residue chain is Sister chromatid cohesion protein PDS5 homolog C (873 aa).

4 HEAT repeats span residues Asn53–Pro92, Asp99–Val136, Ala149–Asp187, and Pro189–Thr227. The segment covering Asn266–Gly301 has biased composition (basic and acidic residues). Disordered stretches follow at residues Asn266–Ser611 and Ser658–Arg873. Thr289 is modified (phosphothreonine). Positions Ser303 to Thr319 are enriched in polar residues. The span at Asp320–Pro334 shows a compositional bias: basic and acidic residues. Over residues Gln336–Thr348 the composition is skewed to polar residues. 2 stretches are compositionally biased toward basic and acidic residues: residues Thr349 to Glu365 and Asp373 to Asp394. Composition is skewed to polar residues over residues Pro400–Ser411 and Ser418–Ser438. A compositionally biased stretch (basic and acidic residues) spans Lys456–Lys466. A compositionally biased stretch (low complexity) spans Lys494–Lys510. 2 stretches are compositionally biased toward basic and acidic residues: residues Ser511–Val526 and Thr535–Leu555. The span at Asp661–Ala681 shows a compositional bias: acidic residues. Positions Ser701 to Thr725 are enriched in low complexity. Over residues Ser726–Glu746 the composition is skewed to basic and acidic residues. Acidic residues predominate over residues Ala747–Glu757. Composition is skewed to low complexity over residues Lys795–Ser814 and Lys822–Ser831. Basic and acidic residues predominate over residues Glu844–Thr853. The span at Lys854–Lys866 shows a compositional bias: low complexity.

This sequence belongs to the PDS5 family. As to quaternary structure, interacts with the cohesin complex.

The protein localises to the nucleus. Its function is as follows. Cohesin cofactor dispensable during the meiotic division but playing an important role in DNA repair by homologous recombination (HR) probably by helping SMC5/SMC6 complex. Regulator of sister chromatid cohesion in mitosis which may stabilize cohesin complex association with chromatin. May couple sister chromatid cohesion during mitosis to DNA replication. Cohesion ensures that chromosome partitioning is accurate in both meiotic and mitotic cells and plays an important role in DNA repair. In Arabidopsis thaliana (Mouse-ear cress), this protein is Sister chromatid cohesion protein PDS5 homolog C.